Consider the following 101-residue polypeptide: Small ribosomal subunit protein uS10 (101 aa).

Belongs to the universal ribosomal protein uS10 family. Part of the 30S ribosomal subunit.

Involved in the binding of tRNA to the ribosomes. This Flavobacterium johnsoniae (strain ATCC 17061 / DSM 2064 / JCM 8514 / BCRC 14874 / CCUG 350202 / NBRC 14942 / NCIMB 11054 / UW101) (Cytophaga johnsonae) protein is Small ribosomal subunit protein uS10.